Consider the following 302-residue polypeptide: Recombination-associated protein RdgC (302 aa).

Belongs to the RdgC family.

It localises to the cytoplasm. Its subcellular location is the nucleoid. May be involved in recombination. In Haemophilus influenzae (strain PittGG), this protein is Recombination-associated protein RdgC.